We begin with the raw amino-acid sequence, 75 residues long: OcyC3 (75 aa).

The signal sequence occupies residues 1–22; sequence MQYKTFLVISLAYLLVADEAAA. Positions 51–75 are excised as a propeptide; sequence EINNVFEPYHENLDLELERFLSQLQ.

In terms of tissue distribution, expressed by the venom gland.

Its subcellular location is the secreted. The protein localises to the target cell membrane. In terms of biological role, amphipathic peptide with probable antimicrobial activity. May act by disrupting the integrity of the bacterial cell membrane. This is OcyC3 from Opisthacanthus cayaporum (South American scorpion).